Here is a 326-residue protein sequence, read N- to C-terminus: MSNGYGDHMDDVCRDDIGRTNLIVNYLPQNMTQDELRSLFSSIGEVESAKLIRDKVAGHSLGYGFVNYLNAKDAERAINTLNGLRLQSKTIKVSVARPSSESIKDANLYISGLPRTMTQKDVEDMFLPFGRIINSRVLVDQATGLSRGVAFIRFDKRSEAEEAIASFNGHKPPGSSEPITVKFAANPNQNKNMALLSQLCHSPARRFGGPVHHQAQRFRFSPMGVDHMSSISGVNVASSASSGWCIFIYNLGQDADEGILWQMFGPFGAVTNVKVIRDFNTNKCKGFGFVTMTNYEEAAMAIASLNGYRLGDKTLQVFFKTSKSHK.

3 RRM domains span residues 20–98 (TNLI…VARP), 106–186 (ANLY…FAAN), and 244–322 (WCIF…FKTS).

The protein belongs to the RRM elav family. Interacts (via RRM3) with cirbp. Unable to form oligomers. Part of a ribonucleoprotein (RNP) complex, at least composed of elavl1/elrA and/or elavl2/elrB, igf2bp3/vg1RBP, ddx6/Xp54, ybx2/frgy2, lsm14b/rap55b and, in a subset of RNP complexes, stau1/staufen.

It localises to the cytoplasm. The protein resides in the cell cortex. Functionally, RNA-binding protein that binds to the 3'-UTR region of mRNAs and increases their stability. Involved in embryonic stem cells (ESCs) differentiation: preferentially binds mRNAs that are not methylated by N6-methyladenosine (m6A), stabilizing them, promoting ESCs differentiation. Binds to poly-U elements and AU-rich elements (AREs) in the 3'-UTR of target mRNAs. Acts cooperatively with cribp to stabilize AU-rich sequence (ARE)-containing mRNAs. May play a role during gastrulation. Required for the vegetal localization of vg1 mRNA. The polypeptide is ELAV-like protein 1 (Xenopus tropicalis (Western clawed frog)).